A 330-amino-acid chain; its full sequence is 2-methyl-6-phytyl-1,4-hydroquinone methyltransferase 1, chloroplastic (330 aa).

A chloroplast-targeting transit peptide spans 1–45 (MKEMVSSSTFRAPGGLGFLGPSKIGLIPLRNRSGVRSRVKYIAPK). The Chloroplast intermembrane segment spans residues 46–295 (CAVSSARPAS…DVEKPVNPFT (250 aa)). The SAM motif I stretch occupies residues 107 to 116 (VVDVGGGTGF). The tract at residues 152–165 (VNIIEGDAEDLPYP) is SAM motif II. Positions 193 to 206 (RVLKLGGVACLIGP) are SAM motif III. The chain crosses the membrane as a helical span at residues 296–316 (FIFRFVMGTICASYYVLVPIY). At 317–330 (MWMKDQIVPKDQPI) the chain is on the stromal side.

This sequence belongs to the class I-like SAM-binding methyltransferase superfamily. MPBQ/MBSQ MT family.

The protein localises to the plastid. It is found in the chloroplast inner membrane. It carries out the reaction 2-methyl-6-phytyl-1,4-benzene-1,4-diol + S-adenosyl-L-methionine = 2,3-dimethyl-6-phytylbenzene-1,4-diol + S-adenosyl-L-homocysteine + H(+). The enzyme catalyses 2-methyl-6-(all-trans-nonaprenyl)benzene-1,4-diol + S-adenosyl-L-methionine = plastoquinol-9 + S-adenosyl-L-homocysteine + H(+). It catalyses the reaction 6-geranylgeranyl-2-methylbenzene-1,4-diol + S-adenosyl-L-methionine = 6-geranylgeranyl-2,3-dimethylbenzene-1,4-diol + S-adenosyl-L-homocysteine + H(+). It functions in the pathway cofactor biosynthesis; tocopherol biosynthesis. Involved in a key methylation step in both tocopherols (vitamin E) and plastoquinone synthesis. Catalyzes the conversion of 2-methyl-6-phytyl-1,4-hydroquinone (MPBQ) to 2,3-dimethyl-6-phytyl-1,4-hydroquinone (DMPQ, a substrate for tocopherol cyclase), and 2-methyl-6-solanyl-1,4-benzoquinone (MSBQ) to plastoquinone. The chain is 2-methyl-6-phytyl-1,4-hydroquinone methyltransferase 1, chloroplastic (ARSM2) from Oryza sativa subsp. japonica (Rice).